The chain runs to 246 residues: Probable transcriptional regulatory protein Rmag_0394 (246 aa).

It belongs to the TACO1 family.

It is found in the cytoplasm. This is Probable transcriptional regulatory protein Rmag_0394 from Ruthia magnifica subsp. Calyptogena magnifica.